Reading from the N-terminus, the 174-residue chain is Large ribosomal subunit protein uL10 (174 aa).

This sequence belongs to the universal ribosomal protein uL10 family. In terms of assembly, part of the ribosomal stalk of the 50S ribosomal subunit. The N-terminus interacts with L11 and the large rRNA to form the base of the stalk. The C-terminus forms an elongated spine to which L12 dimers bind in a sequential fashion forming a multimeric L10(L12)X complex.

Forms part of the ribosomal stalk, playing a central role in the interaction of the ribosome with GTP-bound translation factors. This Acidiphilium cryptum (strain JF-5) protein is Large ribosomal subunit protein uL10.